Reading from the N-terminus, the 236-residue chain is (5-formylfuran-3-yl)methyl phosphate synthase (236 aa).

Lysine 27 (schiff-base intermediate with substrate) is an active-site residue. Catalysis depends on lysine 85, which acts as the Proton acceptor.

It belongs to the MfnB family.

The catalysed reaction is 2 D-glyceraldehyde 3-phosphate = 4-(hydroxymethyl)-2-furancarboxaldehyde phosphate + phosphate + 2 H2O. It participates in cofactor biosynthesis; methanofuran biosynthesis. Catalyzes the formation of 4-(hydroxymethyl)-2-furancarboxaldehyde phosphate (4-HFC-P) from two molecules of glyceraldehyde-3-P (GA-3-P). This Methanococcus maripaludis (strain C6 / ATCC BAA-1332) protein is (5-formylfuran-3-yl)methyl phosphate synthase.